The primary structure comprises 167 residues: U-scoloptoxin-Er5c (167 aa).

The first 22 residues, 1–22 (MKTNCEFPLLCLLIVLVANVEG), serve as a signal peptide directing secretion. Positions 23–94 (EVEDTGLKMV…KRLWRNWERR (72 aa)) are excised as a propeptide. 3 RLWRNWE repeats span residues 34-40 (RLWRNWE), 61-67 (RLWRNWE), and 86-92 (RLWRNWE). Glutamine 95 carries the post-translational modification Pyrrolidone carboxylic acid. One copy of the RLWRNWE 4; approximate repeat lies at 107-113 (ELWRNWE). Positions 112-118 (WEDLKRR) are excised as a propeptide. A Pyrrolidone carboxylic acid modification is found at glutamine 119. One copy of the RLWRNWE 5 repeat lies at 134–140 (RLWRNWE). Positions 139–167 (WEDNHATLRKRSADSLSRQKRLGRERGKE) are excised as a propeptide. A disordered region spans residues 147–167 (RKRSADSLSRQKRLGRERGKE).

The protein belongs to the scoloptoxin-08 family. As to expression, expressed by the venom gland.

It is found in the secreted. This is U-scoloptoxin-Er5c from Ethmostigmus rubripes (Giant centipede).